Reading from the N-terminus, the 202-residue chain is Probable ATP-dependent Clp protease proteolytic subunit 3 (202 aa).

Residue S101 is the Nucleophile of the active site. Residue H126 is part of the active site.

The protein belongs to the peptidase S14 family. As to quaternary structure, fourteen ClpP subunits assemble into 2 heptameric rings which stack back to back to give a disk-like structure with a central cavity, resembling the structure of eukaryotic proteasomes.

Its subcellular location is the cytoplasm. It carries out the reaction Hydrolysis of proteins to small peptides in the presence of ATP and magnesium. alpha-casein is the usual test substrate. In the absence of ATP, only oligopeptides shorter than five residues are hydrolyzed (such as succinyl-Leu-Tyr-|-NHMec, and Leu-Tyr-Leu-|-Tyr-Trp, in which cleavage of the -Tyr-|-Leu- and -Tyr-|-Trp bonds also occurs).. Its function is as follows. Cleaves peptides in various proteins in a process that requires ATP hydrolysis. Has a chymotrypsin-like activity. Plays a major role in the degradation of misfolded proteins. This Synechocystis sp. (strain ATCC 27184 / PCC 6803 / Kazusa) protein is Probable ATP-dependent Clp protease proteolytic subunit 3.